The primary structure comprises 559 residues: CTP synthase (559 aa).

The amidoligase domain stretch occupies residues 1–270 (MTKFVFVTGG…DGLICDKLRL (270 aa)). Residue S13 participates in CTP binding. S13 contacts UTP. ATP contacts are provided by residues 14-19 (SLGKGI) and D71. Positions 71 and 144 each coordinate Mg(2+). CTP-binding positions include 151–153 (DIE), 191–196 (KTKPTQ), and K227. UTP is bound by residues 191–196 (KTKPTQ) and K227. Residues 295 to 548 (TIAMVGKYVD…IKAAIDHQKS (254 aa)) form the Glutamine amidotransferase type-1 domain. Residue G357 coordinates L-glutamine. C384 (nucleophile; for glutamine hydrolysis) is an active-site residue. L-glutamine-binding positions include 385–388 (LGMQ), E408, and R474. Catalysis depends on residues H521 and E523.

It belongs to the CTP synthase family. As to quaternary structure, homotetramer.

It carries out the reaction UTP + L-glutamine + ATP + H2O = CTP + L-glutamate + ADP + phosphate + 2 H(+). It catalyses the reaction L-glutamine + H2O = L-glutamate + NH4(+). The catalysed reaction is UTP + NH4(+) + ATP = CTP + ADP + phosphate + 2 H(+). The protein operates within pyrimidine metabolism; CTP biosynthesis via de novo pathway; CTP from UDP: step 2/2. Allosterically activated by GTP, when glutamine is the substrate; GTP has no effect on the reaction when ammonia is the substrate. The allosteric effector GTP functions by stabilizing the protein conformation that binds the tetrahedral intermediate(s) formed during glutamine hydrolysis. Inhibited by the product CTP, via allosteric rather than competitive inhibition. In terms of biological role, catalyzes the ATP-dependent amination of UTP to CTP with either L-glutamine or ammonia as the source of nitrogen. Regulates intracellular CTP levels through interactions with the four ribonucleotide triphosphates. The polypeptide is CTP synthase (Paracidovorax citrulli (strain AAC00-1) (Acidovorax citrulli)).